The following is a 161-amino-acid chain: Dihydrofolate reductase (161 aa).

One can recognise a DHFR domain in the interval 2–157; that stretch reads TLSIIVAHDK…IPHTFLHLVR (156 aa). 6–8 contacts substrate; sequence IVA. Residues 7–8 and 15–20 contribute to the NADP(+) site; these read VA and IGYQNQ. Asp-28 lines the substrate pocket. An NADP(+)-binding site is contributed by 44–47; that stretch reads GRKT. Arg-58 is a substrate binding site. Residues 63 to 66 and 93 to 98 contribute to the NADP(+) site; these read LTNQ and FGGQTL. A substrate-binding site is contributed by Thr-112.

This sequence belongs to the dihydrofolate reductase family.

It carries out the reaction (6S)-5,6,7,8-tetrahydrofolate + NADP(+) = 7,8-dihydrofolate + NADPH + H(+). Its pathway is cofactor biosynthesis; tetrahydrofolate biosynthesis; 5,6,7,8-tetrahydrofolate from 7,8-dihydrofolate: step 1/1. In terms of biological role, key enzyme in folate metabolism. Catalyzes an essential reaction for de novo glycine and purine synthesis, and for DNA precursor synthesis. This Staphylococcus epidermidis protein is Dihydrofolate reductase (folA).